The chain runs to 1080 residues: Ubiquitin-activating enzyme E1 1 (1080 aa).

The span at 1–14 (MLHKRASEANDKND) shows a compositional bias: basic and acidic residues. 2 disordered regions span residues 1-20 (MLHK…IIGS) and 29-50 (RIDF…GSSR). Low complexity predominate over residues 38 to 49 (DKSSSILASGSS). Residues A502, D528, R539, K552, and 600 to 601 (DN) each bind ATP. Residue C656 is the Glycyl thioester intermediate of the active site.

It belongs to the ubiquitin-activating E1 family. In terms of assembly, monomer. In terms of tissue distribution, expressed in leaves, flowers, roots and stems. Detected in germinating seeds, cotyledons, hypocotyls, vascular tissues, anthers, filaments, pollen, style, stigma, sepals, petals, ovary, developing ovules, funiculi and silique walls.

It carries out the reaction ATP + ubiquitin + [E1 ubiquitin-activating enzyme]-L-cysteine = AMP + diphosphate + S-ubiquitinyl-[E1 ubiquitin-activating enzyme]-L-cysteine.. It participates in protein modification; protein ubiquitination. Functionally, activates ubiquitin by first adenylating its C-terminal glycine residue with ATP, and thereafter linking this residue to the side chain of a cysteine residue in E1, yielding a ubiquitin-E1 thioester and free AMP. The protein is Ubiquitin-activating enzyme E1 1 (UBA1) of Arabidopsis thaliana (Mouse-ear cress).